The sequence spans 349 residues: Aminomethyltransferase (349 aa).

The protein belongs to the GcvT family. In terms of assembly, the glycine cleavage system is composed of four proteins: P, T, L and H.

It carries out the reaction N(6)-[(R)-S(8)-aminomethyldihydrolipoyl]-L-lysyl-[protein] + (6S)-5,6,7,8-tetrahydrofolate = N(6)-[(R)-dihydrolipoyl]-L-lysyl-[protein] + (6R)-5,10-methylene-5,6,7,8-tetrahydrofolate + NH4(+). The glycine cleavage system catalyzes the degradation of glycine. In Thermus thermophilus (strain ATCC BAA-163 / DSM 7039 / HB27), this protein is Aminomethyltransferase.